Here is a 342-residue protein sequence, read N- to C-terminus: tRNA N6-adenosine threonylcarbamoyltransferase (342 aa).

His-114 and His-118 together coordinate Fe cation. Residues Leu-136–Gly-140, Asp-169, Gly-182, Asp-186, and Asn-275 each bind substrate. Residue Asp-301 coordinates Fe cation.

It belongs to the KAE1 / TsaD family. Requires Fe(2+) as cofactor.

It is found in the cytoplasm. The enzyme catalyses L-threonylcarbamoyladenylate + adenosine(37) in tRNA = N(6)-L-threonylcarbamoyladenosine(37) in tRNA + AMP + H(+). Functionally, required for the formation of a threonylcarbamoyl group on adenosine at position 37 (t(6)A37) in tRNAs that read codons beginning with adenine. Is involved in the transfer of the threonylcarbamoyl moiety of threonylcarbamoyl-AMP (TC-AMP) to the N6 group of A37, together with TsaE and TsaB. TsaD likely plays a direct catalytic role in this reaction. The polypeptide is tRNA N6-adenosine threonylcarbamoyltransferase (Streptococcus pyogenes serotype M18 (strain MGAS8232)).